Here is a 205-residue protein sequence, read N- to C-terminus: FMN reductase (NADH) RutF (205 aa).

The tract at residues 171–205 is disordered; it reads PRAPRSGSAPAEPARAARALGARPAEGPALALRSA.

Belongs to the non-flavoprotein flavin reductase family. RutF subfamily.

The enzyme catalyses FMNH2 + NAD(+) = FMN + NADH + 2 H(+). Its function is as follows. Catalyzes the reduction of FMN to FMNH2 which is used to reduce pyrimidine by RutA via the Rut pathway. This chain is FMN reductase (NADH) RutF, found in Methylorubrum extorquens (strain DSM 6343 / CIP 106787 / DM4) (Methylobacterium extorquens).